The sequence spans 280 residues: Octanoyltransferase LIP2p2, chloroplastic (280 aa).

A chloroplast-targeting transit peptide spans 1 to 34 (MVFSVATSSVTNPKLHHHHHLSDFNRNRVSTSLK). In terms of domain architecture, BPL/LPL catalytic spans 81 to 270 (QECSDSLIIL…EFSEVFQLQM (190 aa)). Substrate contacts are provided by residues 123-130 (RGGEVTYH), 191-193 (AIG), and 204-206 (GLA). Cys222 serves as the catalytic Acyl-thioester intermediate.

This sequence belongs to the LipB family. Expressed in roots, leaves, cauline leaves, stems, siliques and flowers.

It localises to the plastid. Its subcellular location is the chloroplast. The catalysed reaction is octanoyl-[ACP] + L-lysyl-[protein] = N(6)-octanoyl-L-lysyl-[protein] + holo-[ACP] + H(+). It participates in protein modification; protein lipoylation via endogenous pathway; protein N(6)-(lipoyl)lysine from octanoyl-[acyl-carrier-protein]: step 1/2. In terms of biological role, catalyzes the transfer of endogenously produced octanoic acid from octanoyl-acyl-carrier-protein onto the lipoyl domains of lipoate-dependent enzymes. Lipoyl-ACP can also act as a substrate although octanoyl-ACP is likely to be the physiological substrate. Together with LIP1P is essential for de novo plastidial protein lipoylation during seed development. Acts redundantly with LIP2P. This Arabidopsis thaliana (Mouse-ear cress) protein is Octanoyltransferase LIP2p2, chloroplastic.